The sequence spans 197 residues: Glycerol-3-phosphate acyltransferase (197 aa).

Helical transmembrane passes span 1–21, 50–70, 77–97, 111–131, 136–156, and 157–177; these read MNIL…GFLI, WPAL…VKIA, GLIE…PIWL, MFLA…LIVL, FVSL…FFYL, and GNYM…VIWK.

The protein belongs to the PlsY family. Probably interacts with PlsX.

Its subcellular location is the cell inner membrane. The catalysed reaction is an acyl phosphate + sn-glycerol 3-phosphate = a 1-acyl-sn-glycero-3-phosphate + phosphate. Its pathway is lipid metabolism; phospholipid metabolism. Catalyzes the transfer of an acyl group from acyl-phosphate (acyl-PO(4)) to glycerol-3-phosphate (G3P) to form lysophosphatidic acid (LPA). This enzyme utilizes acyl-phosphate as fatty acyl donor, but not acyl-CoA or acyl-ACP. The sequence is that of Glycerol-3-phosphate acyltransferase from Prochlorococcus marinus (strain MIT 9312).